Consider the following 88-residue polypeptide: UPF0297 protein GTNG_2488 (88 aa).

It belongs to the UPF0297 family.

The polypeptide is UPF0297 protein GTNG_2488 (Geobacillus thermodenitrificans (strain NG80-2)).